A 256-amino-acid chain; its full sequence is Indole-3-glycerol phosphate synthase (256 aa).

It belongs to the TrpC family.

The enzyme catalyses 1-(2-carboxyphenylamino)-1-deoxy-D-ribulose 5-phosphate + H(+) = (1S,2R)-1-C-(indol-3-yl)glycerol 3-phosphate + CO2 + H2O. It functions in the pathway amino-acid biosynthesis; L-tryptophan biosynthesis; L-tryptophan from chorismate: step 4/5. The chain is Indole-3-glycerol phosphate synthase from Caldanaerobacter subterraneus subsp. tengcongensis (strain DSM 15242 / JCM 11007 / NBRC 100824 / MB4) (Thermoanaerobacter tengcongensis).